A 61-amino-acid chain; its full sequence is Probable tautomerase LL0574 (61 aa).

The Proton acceptor; via imino nitrogen role is filled by P2.

The protein belongs to the 4-oxalocrotonate tautomerase family.

This chain is Probable tautomerase LL0574, found in Lactococcus lactis subsp. lactis (strain IL1403) (Streptococcus lactis).